The primary structure comprises 130 residues: Phosphoribosyl-AMP cyclohydrolase (130 aa).

Residue Asp-74 participates in Mg(2+) binding. Cys-75 contributes to the Zn(2+) binding site. Residues Asp-76 and Asp-78 each contribute to the Mg(2+) site. Zn(2+) contacts are provided by Cys-91 and Cys-98.

The protein belongs to the PRA-CH family. As to quaternary structure, homodimer. Requires Mg(2+) as cofactor. Zn(2+) is required as a cofactor.

It is found in the cytoplasm. It carries out the reaction 1-(5-phospho-beta-D-ribosyl)-5'-AMP + H2O = 1-(5-phospho-beta-D-ribosyl)-5-[(5-phospho-beta-D-ribosylamino)methylideneamino]imidazole-4-carboxamide. It participates in amino-acid biosynthesis; L-histidine biosynthesis; L-histidine from 5-phospho-alpha-D-ribose 1-diphosphate: step 3/9. Functionally, catalyzes the hydrolysis of the adenine ring of phosphoribosyl-AMP. In Bradyrhizobium sp. (strain ORS 278), this protein is Phosphoribosyl-AMP cyclohydrolase.